Consider the following 551-residue polypeptide: Protein GPR107 (551 aa).

Residues 1–33 (MAVRVPLGCTGSFCPRLLPLLALLELLVDPSLG) form the signal peptide. The Extracellular segment spans residues 34-262 (RVHHLALKDD…YLSAGEIPLP (229 aa)). The N-linked (GlcNAc...) asparagine glycan is linked to asparagine 64. A disordered region spans residues 127-183 (GVKVRSPPEAGKQLPEIVFSKDEKVPSRSQEPAVSSNPKDSKVQRTPDGSKAQRSTV). Polar residues predominate over residues 153 to 164 (SRSQEPAVSSNP). N-linked (GlcNAc...) asparagine glycosylation occurs at asparagine 209. The chain crosses the membrane as a helical span at residues 263–283 (KLYVSMALLFFLSGTVWIHIL). Residues 284–292 (RKRRNDVFK) lie on the Cytoplasmic side of the membrane. A helical transmembrane segment spans residues 293–313 (IHWLMAALPFTKSLSLVFHAI). Topologically, residues 314–336 (DYHYISSQGFPIEGWAVVYYITH) are extracellular. A helical membrane pass occupies residues 337-357 (LLKGALLFITIALIGTGWAFI). The Cytoplasmic segment spans residues 358–367 (KHILSDKDKK). Residues 368 to 388 (IFMIVIPLQVLANVAYIIIES) form a helical membrane-spanning segment. Topologically, residues 389–401 (TEEGTTEYGLWKD) are extracellular. A helical transmembrane segment spans residues 402–422 (SLFLVDLLCCGAILFPVVWSI). Residues 423-443 (RHLQEASATDGKAAINLAKLK) lie on the Cytoplasmic side of the membrane. A helical transmembrane segment spans residues 444-466 (LFRHYYVLIVCYIYFTRIIAFLL). The Extracellular segment spans residues 467 to 475 (KFAVPFQWK). The chain crosses the membrane as a helical span at residues 476–495 (WLYQLLDETATLVFFVLTGY). At 496-551 (KFRPASDNPYLQLSQEEDDLEMESVVTTSGVMENMKKVKKVSNGAVEPQGSWEGTA) the chain is on the cytoplasmic side.

The protein belongs to the LU7TM family. In terms of processing, cleaved by FURIN to yield two fragments that remain associated via a disulfide bond. Widely expressed. Not detected in the duodenum, nor in the exocrine pancreas.

The protein localises to the cell membrane. It is found in the golgi apparatus. It localises to the trans-Golgi network membrane. Functionally, has been proposed to act as a receptor for neuronostatin, a peptide derived from the somatostatin/SST precursor. Involved in blood sugar regulation through the induction of glucagon in response to low glucose. The polypeptide is Protein GPR107 (Gpr107) (Rattus norvegicus (Rat)).